We begin with the raw amino-acid sequence, 247 residues long: O-methyltransferase imqG (247 aa).

Residues glutamate 84, 86–87, and alanine 138 each bind S-adenosyl-L-methionine; that span reads GT. A divalent metal cation is bound by residues aspartate 163, aspartate 189, and asparagine 190. Substrate is bound at residue aspartate 163.

Belongs to the class I-like SAM-binding methyltransferase superfamily. Cation-dependent O-methyltransferase family. CCoAMT subfamily. As to quaternary structure, homodimer. The cofactor is a divalent metal cation.

It functions in the pathway secondary metabolite biosynthesis. Functionally, O-methyltransferase; part of the gene cluster that mediates the biosynthesis of imizoquins A to D, tripeptide-derived alkaloids that serve a protective role against oxidative stress that are essential for normal germination. ImqB is a canonical three-module NRPS that assembles the tripeptide backbone of the imizoquins via condensation of Trp, Tyr, and Leu-derived precursors. N-methylation by imqF and phenol oxidation by imqC, followed by cyclization via the FAD-dependent oxidase imqH carry out the three-step transformation of L-tyrosine into tetrahydroisoquinoline. Importantly, this sequence requires the presence of a free amine in the tyrosine moiety, indicating that isoquinoline formation occurs prior to peptide bond formation. The imidazolidin-4-one ring of imizoquins could form following additional oxidation of the methyl-derived bridgehead carbon by imqH. Lastly, O-methylation by imqG and leucine hydroxylation by imqE complete biosynthesis of the imizoquins. The polypeptide is O-methyltransferase imqG (Aspergillus flavus (strain ATCC 200026 / FGSC A1120 / IAM 13836 / NRRL 3357 / JCM 12722 / SRRC 167)).